We begin with the raw amino-acid sequence, 632 residues long: Palmitoyltransferase ZDHHC17 (632 aa).

Residues 1-304 (MQREEGFNTK…LKADKEFRQK (304 aa)) are Cytoplasmic-facing. The segment at 11-305 (MADGPDEYET…KADKEFRQKV (295 aa)) is necessary and sufficient for interaction with DNAJC5 and SNAP25. ANK repeat units lie at residues 51–86 (THID…VRQP), 89–118 (ENVT…IVDQ), 123–152 (LNST…DPSL), 156–185 (EGCS…DVDM), 189–219 (NGMT…SVNL), 224–253 (HKNT…NVDA), and 257–286 (KGES…AKGY). A run of 2 helical transmembrane segments spans residues 305–325 (VMLG…DLDI) and 326–346 (DSWL…QFLS). Residues 347-357 (KSFFDHSMHSA) lie on the Cytoplasmic side of the membrane. Residues 358-378 (LPLGIYLATKFWMYVTWFFWF) form a helical membrane-spanning segment. Over 379-381 (WND) the chain is Lumenal. The helical transmembrane segment at 382–402 (LNFLFIHLPFLANSVALFYNF) threads the bilayer. The Cytoplasmic portion of the chain corresponds to 403–480 (GKSWKSDPGI…GNCVGAGNHR (78 aa)). In terms of domain architecture, DHHC spans 437–487 (IFCSTCLIRKPVRSKHCGVCNRCIAKFDHHCPWVGNCVGAGNHRYFMGYLF). Cysteine 467 acts as the S-palmitoyl cysteine intermediate in catalysis. Residues 481-501 (YFMGYLFFLLFMICWMIYGCV) traverse the membrane as a helical segment. Topologically, residues 502–529 (SYWGLHCETTYTKDGFWTYITQIATCSP) are lumenal. The chain crosses the membrane as a helical span at residues 530-550 (WMFWMFLNSVFHFLWVAVLLM). The Cytoplasmic portion of the chain corresponds to 551-632 (CQLYQITCLG…QISGSGYQLV (82 aa)).

It belongs to the DHHC palmitoyltransferase family. AKR/ZDHHC17 subfamily. Interacts (via ANK repeats) with numerous proteins (via the consensus sequence motif [VIAP]-[VIT]-x-x-Q-P). Interacts (via ANK repeats) with CLIP3. Interacts (via ANK repeats) with HTT. Interacts (via ANK repeats) with DNAJC5 (via C-terminus). Interacts (via ANK repeats) with MAP6. Interacts (via ANK repeats) with SNAP23. Interacts (via ANK repeats) with SNAP25. Interacts (via ANK repeats) with EVL. Interacts with SPRED1 and SPRED3. Interacts with GPM6A and OPTN. May interact (via ANK repeats) with SPRED2. May interact with NTRK1; may regulate its localization and function. In terms of processing, autopalmitoylated. Autopalmitoylation has a regulatory role in ZDHHC17-mediated Mg(2+) transport. In terms of tissue distribution, expressed in liver, testis, kidney, heart, pancreas and brain. Highest expression was seen in the brain. Localized predominantly in the perinuclear regions of neurons from the cortex, striatum and hippocampus. Colocalized with HTT in the medium spiny neurons of the striatum and the spiny neurons that project into the globus pallidus.

Its subcellular location is the golgi apparatus membrane. The protein localises to the cytoplasmic vesicle membrane. It localises to the presynaptic cell membrane. The enzyme catalyses L-cysteinyl-[protein] + hexadecanoyl-CoA = S-hexadecanoyl-L-cysteinyl-[protein] + CoA. The catalysed reaction is L-cysteinyl-[protein] + tetradecanoyl-CoA = S-tetradecanoyl-L-cysteinyl-[protein] + CoA. It catalyses the reaction L-cysteinyl-[protein] + octadecanoyl-CoA = S-octadecanoyl-L-cysteinyl-[protein] + CoA. Functionally, palmitoyltransferase that catalyzes the addition of palmitate onto various protein substrates and is involved in a variety of cellular processes. Has no stringent fatty acid selectivity and in addition to palmitate can also transfer onto target proteins myristate from tetradecanoyl-CoA and stearate from octadecanoyl-CoA. Palmitoyltransferase specific for a subset of neuronal proteins, including SNAP25, DLG4/PSD95, GAD2, SYT1 and HTT. Also palmitoylates neuronal protein GPM6A as well as SPRED1 and SPRED3. Could also play a role in axonogenesis through the regulation of NTRK1 and the downstream ERK1/ERK2 signaling cascade. May be involved in the sorting or targeting of critical proteins involved in the initiating events of endocytosis at the plasma membrane. May play a role in Mg(2+) transport. Could also palmitoylate DNAJC5 and regulate its localization to the Golgi membrane. Palmitoylates CASP6, thereby preventing its dimerization and subsequent activation. The sequence is that of Palmitoyltransferase ZDHHC17 from Mus musculus (Mouse).